A 392-amino-acid chain; its full sequence is HORMA domain-containing protein 1 (392 aa).

In terms of domain architecture, HORMA spans 25-227 (QQSLMFVKRL…TPFHTFRLKV (203 aa)). Disordered stretches follow at residues 271-292 (IKTKMNEQNENSGTSEIKEPNL) and 371-392 (LESSSQESVLKRRRVSEPNEHT). Residue Ser374 is modified to Phosphoserine. The Nuclear localization signal signature appears at 381–384 (KRRR).

In terms of assembly, interacts with HORMAD2. Interacts with IHO1. In terms of processing, phosphorylated at Ser-375 in a SPO11-dependent manner.

It is found in the nucleus. The protein resides in the chromosome. In terms of biological role, plays a key role in meiotic progression. Regulates 3 different functions during meiosis: ensures that sufficient numbers of processed DNA double-strand breaks (DSBs) are available for successful homology search by increasing the steady-state numbers of single-stranded DSB ends. Promotes synaptonemal-complex formation independently of its role in homology search. Plays a key role in the male mid-pachytene checkpoint and the female meiotic prophase checkpoint: required for efficient build-up of ATR activity on unsynapsed chromosome regions, a process believed to form the basis of meiotic silencing of unsynapsed chromatin (MSUC) and meiotic prophase quality control in both sexes. The chain is HORMA domain-containing protein 1 (Hormad1) from Rattus norvegicus (Rat).